A 336-amino-acid polypeptide reads, in one-letter code: Monoacylglycerol lipase ABHD6 (336 aa).

Residues 1-8 (MDLDVVNM) are Extracellular-facing. A helical; Signal-anchor for type II membrane protein transmembrane segment spans residues 9 to 29 (FVIAGGTLAIPILAFVASFLL). Residues 30-336 (WPSALIRIYY…VHNTDNKKLN (307 aa)) lie on the Cytoplasmic side of the membrane. Catalysis depends on Ser-148, which acts as the Nucleophile. Residues Asp-278 and His-306 each act as charge relay system in the active site.

This sequence belongs to the AB hydrolase superfamily. In terms of tissue distribution, widely expressed with higher expression in small intestine, liver and brown adipose tissue. In brain, expressed postsynaptically in cortical neurons but not detected in microglia (at protein level).

The protein resides in the late endosome membrane. It is found in the lysosome membrane. Its subcellular location is the mitochondrion membrane. It catalyses the reaction Hydrolyzes glycerol monoesters of long-chain fatty acids.. It carries out the reaction 2-(5Z,8Z,11Z,14Z-eicosatetraenoyl)-glycerol + H2O = glycerol + (5Z,8Z,11Z,14Z)-eicosatetraenoate + H(+). The catalysed reaction is 1-octanoylglycerol + H2O = octanoate + glycerol + H(+). The enzyme catalyses 1-decanoylglycerol + H2O = decanoate + glycerol + H(+). It catalyses the reaction 1-dodecanoylglycerol + H2O = dodecanoate + glycerol + H(+). It carries out the reaction 1-tetradecanoylglycerol + H2O = tetradecanoate + glycerol + H(+). The catalysed reaction is 2-hexadecanoylglycerol + H2O = glycerol + hexadecanoate + H(+). The enzyme catalyses 2-(9Z-octadecenoyl)-glycerol + H2O = glycerol + (9Z)-octadecenoate + H(+). It catalyses the reaction 1-(9Z-octadecenoyl)-glycerol + H2O = glycerol + (9Z)-octadecenoate + H(+). It carries out the reaction 2-(9Z,12Z-octadecadienoyl)-glycerol + H2O = (9Z,12Z)-octadecadienoate + glycerol + H(+). The catalysed reaction is 1-(5Z,8Z,11Z,14Z-eicosatetraenoyl)-glycerol + H2O = glycerol + (5Z,8Z,11Z,14Z)-eicosatetraenoate + H(+). The enzyme catalyses 1-(9Z,12Z-octadecadienoyl)-glycerol + H2O = (9Z,12Z)-octadecadienoate + glycerol + H(+). It catalyses the reaction 3-(9Z-octadecenoyl)-sn-glycero-1-phospho-(3'-(9Z-octadecenoyl)-1'-sn-glycerol) + H2O = 3-(9Z-octadecenoyl)-sn-glycero-1-phospho-(1'-sn-glycerol) + (9Z)-octadecenoate + H(+). It carries out the reaction (S,S)-2-(9Z-octadecenoyl)-sn-glycero-1-phospho-(2'-(9Z-octadecenoyl)-1'-sn-glycerol) + H2O = (S,S)-2-(9Z-octadecenoyl)-sn-glycero-1-phospho-(1'-sn-glycerol) + (9Z)-octadecenoate + H(+). The catalysed reaction is (R,R)-2-(9Z-octadecenoyl)-sn-glycero-3-phospho-(2'-(9Z-octadecenoyl)-3'-sn-glycerol) + H2O = (R,R)-2-(9Z-octadecenoyl)-sn-glycero-3-phospho-(3'-sn-glycerol) + (9Z)-octadecenoate + H(+). Its function is as follows. Lipase that preferentially hydrolysis medium-chain saturated monoacylglycerols including 2-arachidonoylglycerol. Through 2-arachidonoylglycerol degradation may regulate endocannabinoid signaling pathways. Also has a lysophosphatidyl lipase activity with a preference for lysophosphatidylglycerol among other lysophospholipids. Also able to degrade bis(monoacylglycero)phosphate (BMP) and constitutes the major enzyme for BMP catabolism. BMP, also known as lysobisphosphatidic acid, is enriched in late endosomes and lysosomes and plays a key role in the formation of intraluminal vesicles and in lipid sorting. This is Monoacylglycerol lipase ABHD6 from Mus musculus (Mouse).